The chain runs to 462 residues: Asparagine--tRNA ligase (462 aa).

The protein belongs to the class-II aminoacyl-tRNA synthetase family. In terms of assembly, homodimer.

The protein resides in the cytoplasm. It catalyses the reaction tRNA(Asn) + L-asparagine + ATP = L-asparaginyl-tRNA(Asn) + AMP + diphosphate + H(+). The sequence is that of Asparagine--tRNA ligase from Borreliella burgdorferi (strain ATCC 35210 / DSM 4680 / CIP 102532 / B31) (Borrelia burgdorferi).